Reading from the N-terminus, the 354-residue chain is Uroporphyrinogen decarboxylase (354 aa).

Residues 27–31, Asp77, Tyr154, Ser209, and His327 each bind substrate; that span reads RQAGR.

It belongs to the uroporphyrinogen decarboxylase family. In terms of assembly, homodimer.

It is found in the cytoplasm. The catalysed reaction is uroporphyrinogen III + 4 H(+) = coproporphyrinogen III + 4 CO2. It participates in porphyrin-containing compound metabolism; protoporphyrin-IX biosynthesis; coproporphyrinogen-III from 5-aminolevulinate: step 4/4. Its function is as follows. Catalyzes the decarboxylation of four acetate groups of uroporphyrinogen-III to yield coproporphyrinogen-III. The sequence is that of Uroporphyrinogen decarboxylase from Shewanella frigidimarina (strain NCIMB 400).